Reading from the N-terminus, the 572-residue chain is Hsp70-Hsp90 organizing protein 1 (572 aa).

TPR repeat units lie at residues 2 to 35, 37 to 69, and 70 to 103; these read AEEA…APTN, VLFS…KPYW, and PKGY…DPTN. Positions 133 to 172 constitute an STI1 1 domain; the sequence is GPEMWTKLTSDPSTRGFLQQPDFVNMMQEIQKNPSSLNLY. The residue at position 167 (Ser167) is a Phosphoserine. Residues 189–248 are disordered; that stretch reads KFRPPPPQGDEAEVPESDMGQSSSNEPEVEKKREPEPEPEPEVTEEKEKKERKEKAKKEK. Residues 232-248 are compositionally biased toward basic and acidic residues; that stretch reads TEEKEKKERKEKAKKEK. Positions 241–258 match the Bipartite nuclear localization signal motif; sequence KEKAKKEKELGNAAYKKK. 7 TPR repeats span residues 244-277, 279-311, 319-356, 358-382, 383-416, 418-450, and 451-484; these read AKKE…DDED, SYLT…GREL, ARAL…HRNP, TLKR…DPKL, GDEE…NPND, KAYS…DPTF, and SKGY…DPSN. One can recognise an STI1 2 domain in the interval 521–560; that stretch reads DPEIQNILTDPVMRQVLSDLQENPSAAQKHMQNPMVMNKI.

In terms of assembly, co-chaperone that forms a complex with HSP70 and HSP90 and preproteins (e.g. chloroplast preproteins). In terms of processing, phosphorylated. Post-translationally, acetylated.

The protein localises to the cytoplasm. Its subcellular location is the nucleus. Functionally, mediates the association of the molecular chaperones HSP70 and HSP90. Mediates nuclear encoded chloroplast preproteins binding to HSP90 prior to chloroplastic sorting. This Arabidopsis thaliana (Mouse-ear cress) protein is Hsp70-Hsp90 organizing protein 1 (HOP1).